Consider the following 221-residue polypeptide: Protein-L-isoaspartate O-methyltransferase (221 aa).

Ser60 is a catalytic residue.

This sequence belongs to the methyltransferase superfamily. L-isoaspartyl/D-aspartyl protein methyltransferase family.

The protein resides in the cytoplasm. The catalysed reaction is [protein]-L-isoaspartate + S-adenosyl-L-methionine = [protein]-L-isoaspartate alpha-methyl ester + S-adenosyl-L-homocysteine. Catalyzes the methyl esterification of L-isoaspartyl residues in peptides and proteins that result from spontaneous decomposition of normal L-aspartyl and L-asparaginyl residues. It plays a role in the repair and/or degradation of damaged proteins. The sequence is that of Protein-L-isoaspartate O-methyltransferase from Rhodospirillum centenum (strain ATCC 51521 / SW).